The primary structure comprises 244 residues: Derlin-2.2 (244 aa).

Over M1–T21 the chain is Cytoplasmic. The helical transmembrane segment at A22–L42 threads the bilayer. Topologically, residues N43–F96 are lumenal. The helical transmembrane segment at L97 to I117 threads the bilayer. Residues P118 to S121 are Cytoplasmic-facing. A helical transmembrane segment spans residues A122–W142. Topologically, residues S143–S152 are lumenal. A helical transmembrane segment spans residues F153–I173. The Cytoplasmic segment spans residues L174–D244.

It belongs to the derlin family.

The protein localises to the endoplasmic reticulum membrane. Functionally, may be involved in the degradation process of specific misfolded endoplasmic reticulum (ER) luminal proteins. In Arabidopsis thaliana (Mouse-ear cress), this protein is Derlin-2.2 (DER2.2).